Here is a 485-residue protein sequence, read N- to C-terminus: Protein nucleotidyltransferase YdiU (485 aa).

ATP-binding residues include Gly90, Gly92, Arg93, Lys113, Asp125, Gly126, Arg176, and Arg183. Asp252 serves as the catalytic Proton acceptor. Residues Asn253 and Asp262 each contribute to the Mg(2+) site. Asp262 contacts ATP.

This sequence belongs to the SELO family. The cofactor is Mg(2+). Mn(2+) is required as a cofactor.

It catalyses the reaction L-seryl-[protein] + ATP = 3-O-(5'-adenylyl)-L-seryl-[protein] + diphosphate. The enzyme catalyses L-threonyl-[protein] + ATP = 3-O-(5'-adenylyl)-L-threonyl-[protein] + diphosphate. It carries out the reaction L-tyrosyl-[protein] + ATP = O-(5'-adenylyl)-L-tyrosyl-[protein] + diphosphate. The catalysed reaction is L-histidyl-[protein] + UTP = N(tele)-(5'-uridylyl)-L-histidyl-[protein] + diphosphate. It catalyses the reaction L-seryl-[protein] + UTP = O-(5'-uridylyl)-L-seryl-[protein] + diphosphate. The enzyme catalyses L-tyrosyl-[protein] + UTP = O-(5'-uridylyl)-L-tyrosyl-[protein] + diphosphate. In terms of biological role, nucleotidyltransferase involved in the post-translational modification of proteins. It can catalyze the addition of adenosine monophosphate (AMP) or uridine monophosphate (UMP) to a protein, resulting in modifications known as AMPylation and UMPylation. The chain is Protein nucleotidyltransferase YdiU from Aliivibrio fischeri (strain ATCC 700601 / ES114) (Vibrio fischeri).